The chain runs to 171 residues: UPF0398 protein MGAS9429_Spy1349 (171 aa).

The protein belongs to the UPF0398 family.

The polypeptide is UPF0398 protein MGAS9429_Spy1349 (Streptococcus pyogenes serotype M12 (strain MGAS9429)).